The sequence spans 134 residues: MSWQAYVDDHLMCDIEGHEGHRLTAAAIVGQDGSVWAQSATFPQFKPEEMNGIMTDFNEPGHLAPTGLHLGGTKYMVIQGEAGAVIRGKKGSGGITIKKTGQALVFGIYEEPVTPGQCNMVVERLGDYLLEQGL.

C13 and C118 form a disulfide bridge. The Involved in PIP2 interaction motif lies at 84–100; that stretch reads AVIRGKKGSGGITIKKT. Residue T114 is modified to Phosphothreonine.

The protein belongs to the profilin family. As to quaternary structure, occurs in many kinds of cells as a complex with monomeric actin in a 1:1 ratio. In terms of processing, phosphorylated by MAP kinases.

It localises to the cytoplasm. It is found in the cytoskeleton. Functionally, binds to actin and affects the structure of the cytoskeleton. At high concentrations, profilin prevents the polymerization of actin, whereas it enhances it at low concentrations. The chain is Profilin-3 from Olea europaea (Common olive).